The sequence spans 644 residues: Threonine--tRNA ligase (644 aa).

One can recognise a TGS domain in the interval 1–61; that stretch reads MNVSIEGQML…DGTTTIEPVY (61 aa). Residues 241–532 form a catalytic region; it reads DHRKLGQQLD…LIEQYAGAFP (292 aa). 3 residues coordinate Zn(2+): cysteine 333, histidine 384, and histidine 509.

The protein belongs to the class-II aminoacyl-tRNA synthetase family. Homodimer. It depends on Zn(2+) as a cofactor.

It is found in the cytoplasm. The enzyme catalyses tRNA(Thr) + L-threonine + ATP = L-threonyl-tRNA(Thr) + AMP + diphosphate + H(+). In terms of biological role, catalyzes the attachment of threonine to tRNA(Thr) in a two-step reaction: L-threonine is first activated by ATP to form Thr-AMP and then transferred to the acceptor end of tRNA(Thr). Also edits incorrectly charged L-seryl-tRNA(Thr). The chain is Threonine--tRNA ligase from Nitratidesulfovibrio vulgaris (strain ATCC 29579 / DSM 644 / CCUG 34227 / NCIMB 8303 / VKM B-1760 / Hildenborough) (Desulfovibrio vulgaris).